Reading from the N-terminus, the 89-residue chain is Large ribosomal subunit protein bL27 (89 aa).

The segment at 1 to 21 is disordered; it reads MAHKKAGGSSRNGRDSAGRRL.

The protein belongs to the bacterial ribosomal protein bL27 family.

The polypeptide is Large ribosomal subunit protein bL27 (Erythrobacter litoralis (strain HTCC2594)).